The sequence spans 197 residues: Peptidyl-tRNA hydrolase (197 aa).

Y21 is a tRNA binding site. H26 (proton acceptor) is an active-site residue. The tRNA site is built by Y72, N74, and N120.

Belongs to the PTH family. Monomer.

The protein resides in the cytoplasm. It carries out the reaction an N-acyl-L-alpha-aminoacyl-tRNA + H2O = an N-acyl-L-amino acid + a tRNA + H(+). Functionally, hydrolyzes ribosome-free peptidyl-tRNAs (with 1 or more amino acids incorporated), which drop off the ribosome during protein synthesis, or as a result of ribosome stalling. Its function is as follows. Catalyzes the release of premature peptidyl moieties from peptidyl-tRNA molecules trapped in stalled 50S ribosomal subunits, and thus maintains levels of free tRNAs and 50S ribosomes. The chain is Peptidyl-tRNA hydrolase from Alkalilimnicola ehrlichii (strain ATCC BAA-1101 / DSM 17681 / MLHE-1).